A 122-amino-acid polypeptide reads, in one-letter code: Large ribosomal subunit protein uL14 (122 aa).

Belongs to the universal ribosomal protein uL14 family. In terms of assembly, part of the 50S ribosomal subunit. Forms a cluster with proteins L3 and L19. In the 70S ribosome, L14 and L19 interact and together make contacts with the 16S rRNA in bridges B5 and B8.

Binds to 23S rRNA. Forms part of two intersubunit bridges in the 70S ribosome. This is Large ribosomal subunit protein uL14 from Xanthomonas oryzae pv. oryzae (strain MAFF 311018).